A 154-amino-acid polypeptide reads, in one-letter code: Interleukin-2 (154 aa).

The N-terminal stretch at 1-20 is a signal peptide; that stretch reads MYKLQFLSCIALTLALVANS. An O-linked (GalNAc...) threonine glycan is attached at Thr23. A disulfide bridge links Cys78 with Cys126. Asn111 carries an N-linked (GlcNAc...) asparagine glycan.

The protein belongs to the IL-2 family.

Its subcellular location is the secreted. In terms of biological role, cytokine produced by activated CD4-positive helper T-cells and to a lesser extend activated CD8-positive T-cells and natural killer (NK) cells that plays pivotal roles in the immune response and tolerance. Binds to a receptor complex composed of either the high-affinity trimeric IL-2R (IL2RA/CD25, IL2RB/CD122 and IL2RG/CD132) or the low-affinity dimeric IL-2R (IL2RB and IL2RG). Interaction with the receptor leads to oligomerization and conformation changes in the IL-2R subunits resulting in downstream signaling starting with phosphorylation of JAK1 and JAK3. In turn, JAK1 and JAK3 phosphorylate the receptor to form a docking site leading to the phosphorylation of several substrates including STAT5. This process leads to activation of several pathways including STAT, phosphoinositide-3-kinase/PI3K and mitogen-activated protein kinase/MAPK pathways. Functions as a T-cell growth factor and can increase NK-cell cytolytic activity as well. Promotes strong proliferation of activated B-cells and subsequently immunoglobulin production. Plays a pivotal role in regulating the adaptive immune system by controlling the survival and proliferation of regulatory T-cells, which are required for the maintenance of immune tolerance. Moreover, participates in the differentiation and homeostasis of effector T-cell subsets, including Th1, Th2, Th17 as well as memory CD8-positive T-cells. This is Interleukin-2 (IL2) from Camelus bactrianus (Bactrian camel).